Here is a 611-residue protein sequence, read N- to C-terminus: Glutamine--fructose-6-phosphate aminotransferase [isomerizing] (611 aa).

Catalysis depends on Cys2, which acts as the Nucleophile; for GATase activity. One can recognise a Glutamine amidotransferase type-2 domain in the interval 2–219; it reads CGIVGAVAER…EGDIAEIRRD (218 aa). 2 SIS domains span residues 287–427 and 460–601; these read AADL…VRGT and IAEL…VDQP. The active-site For Fru-6P isomerization activity is the Lys606.

In terms of assembly, homodimer.

The protein resides in the cytoplasm. It carries out the reaction D-fructose 6-phosphate + L-glutamine = D-glucosamine 6-phosphate + L-glutamate. In terms of biological role, catalyzes the first step in hexosamine metabolism, converting fructose-6P into glucosamine-6P using glutamine as a nitrogen source. This is Glutamine--fructose-6-phosphate aminotransferase [isomerizing] from Pseudomonas putida (strain ATCC 47054 / DSM 6125 / CFBP 8728 / NCIMB 11950 / KT2440).